We begin with the raw amino-acid sequence, 495 residues long: Alpha-1B-glycoprotein (495 aa).

The N-terminal stretch at 1 to 21 is a signal peptide; it reads MSMLVVFLLLWGVTWGPVTEA. 5 Ig-like V-type domains span residues 22–113, 114–206, 207–299, 300–397, and 398–495; these read AIFY…LTGP, KSLP…ELAA, PPPP…PVEL, ILSD…LHVD, and GPPP…VAES. N44 carries N-linked (GlcNAc...) (complex) asparagine glycosylation. 5 cysteine pairs are disulfide-bonded: C49/C93, C139/C182, C232/C279, C325/C374, and C423/C470. N179 is a glycosylation site (N-linked (GlcNAc...) asparagine). 2 N-linked (GlcNAc...) asparagine glycosylation sites follow: N363 and N371.

Interacts with CRISP3. In terms of tissue distribution, plasma.

It is found in the secreted. The polypeptide is Alpha-1B-glycoprotein (A1BG) (Homo sapiens (Human)).